A 293-amino-acid chain; its full sequence is Meteorin (293 aa).

Residues 1 to 23 (MGFPAAALLCALCCGLLAPAARA) form the signal peptide. Disulfide bonds link C30–C51, C82–C118, C171–C242, C174–C266, and C184–C288.

It belongs to the meteorin family. Monomer.

It localises to the secreted. Functionally, involved in both glial cell differentiation and axonal network formation during neurogenesis. Promotes astrocyte differentiation and transforms cerebellar astrocytes into radial glia. Also induces axonal extension in small and intermediate neurons of sensory ganglia by activating nearby satellite glia. This chain is Meteorin (METRN), found in Homo sapiens (Human).